The following is a 1054-amino-acid chain: DIS3-like exonuclease 1 (1054 aa).

The CSD1 domain occupies 236–309 (AGIKSGRYIQ…PKNEWKGRTV (74 aa)). One can recognise a CSD2 domain in the interval 365–431 (ILVTPWDYRI…GEIATILVEN (67 aa)). Positions 465–816 (RKDLRKSHLV…VHRLLMAAIS (352 aa)) constitute an RNB domain. At S989 the chain carries Phosphoserine.

Belongs to the RNR ribonuclease family. In terms of assembly, component of the RNA exosome complex. The catalytically inactive RNA exosome core (Exo-9) complex is believed to associate with catalytic subunits EXOSC10, and DIS3 or DIS3L in cytoplasmic- and nuclear-specific RNA exosome complex forms. The cofactor is Mg(2+).

The protein resides in the cytoplasm. It carries out the reaction Exonucleolytic cleavage in the 3'- to 5'-direction to yield nucleoside 5'-phosphates.. Catalytic component of the RNA exosome complex which has 3'-&gt;5' exoribonuclease activity and participates in a multitude of cellular RNA processing and degradation events. In the cytoplasm, the RNA exosome complex is involved in general mRNA turnover and specifically degrades inherently unstable mRNAs containing AU-rich elements (AREs) within their 3' untranslated regions, and in RNA surveillance pathways, preventing translation of aberrant mRNAs. It seems to be involved in degradation of histone mRNA. The sequence is that of DIS3-like exonuclease 1 (DIS3L) from Homo sapiens (Human).